The primary structure comprises 710 residues: Phosphoribosylformylglycinamidine synthase subunit PurL (710 aa).

The active site involves H36. The ATP site is built by Y39 and K80. E82 contacts Mg(2+). Substrate is bound by residues 83–86 (SHNH) and R105. Catalysis depends on H84, which acts as the Proton acceptor. D106 contacts Mg(2+). Q226 serves as a coordination point for substrate. Position 252 (D252) interacts with Mg(2+). Substrate is bound at residue 294–296 (ETQ). 2 residues coordinate ATP: D470 and G507. A substrate-binding site is contributed by S510.

Belongs to the FGAMS family. Monomer. Part of the FGAM synthase complex composed of 1 PurL, 1 PurQ and 2 PurS subunits.

It localises to the cytoplasm. It catalyses the reaction N(2)-formyl-N(1)-(5-phospho-beta-D-ribosyl)glycinamide + L-glutamine + ATP + H2O = 2-formamido-N(1)-(5-O-phospho-beta-D-ribosyl)acetamidine + L-glutamate + ADP + phosphate + H(+). Its pathway is purine metabolism; IMP biosynthesis via de novo pathway; 5-amino-1-(5-phospho-D-ribosyl)imidazole from N(2)-formyl-N(1)-(5-phospho-D-ribosyl)glycinamide: step 1/2. In terms of biological role, part of the phosphoribosylformylglycinamidine synthase complex involved in the purines biosynthetic pathway. Catalyzes the ATP-dependent conversion of formylglycinamide ribonucleotide (FGAR) and glutamine to yield formylglycinamidine ribonucleotide (FGAM) and glutamate. The FGAM synthase complex is composed of three subunits. PurQ produces an ammonia molecule by converting glutamine to glutamate. PurL transfers the ammonia molecule to FGAR to form FGAM in an ATP-dependent manner. PurS interacts with PurQ and PurL and is thought to assist in the transfer of the ammonia molecule from PurQ to PurL. The chain is Phosphoribosylformylglycinamidine synthase subunit PurL from Sulfolobus acidocaldarius (strain ATCC 33909 / DSM 639 / JCM 8929 / NBRC 15157 / NCIMB 11770).